The primary structure comprises 79 residues: uncharacterized protein (79 aa).

It localises to the mitochondrion. This is an uncharacterized protein from Marchantia polymorpha (Common liverwort).